The sequence spans 151 residues: MKPDTRTGGGPSQRMLRVGELVRHALADVLQRGSVTDPVLAAHIITVPEVRMSPDLKIATCYVMPLGGKDITPVIKALAANARYLRLEVGRRMELKSVPELRFREDTSFDEGARMDALLRSPKVVRDLDDTSSDDTSPDANTDTDKETDAE.

The tract at residues 120-151 (RSPKVVRDLDDTSSDDTSPDANTDTDKETDAE) is disordered.

Belongs to the RbfA family. Monomer. Binds 30S ribosomal subunits, but not 50S ribosomal subunits or 70S ribosomes.

It localises to the cytoplasm. In terms of biological role, one of several proteins that assist in the late maturation steps of the functional core of the 30S ribosomal subunit. Associates with free 30S ribosomal subunits (but not with 30S subunits that are part of 70S ribosomes or polysomes). Required for efficient processing of 16S rRNA. May interact with the 5'-terminal helix region of 16S rRNA. In Xanthobacter autotrophicus (strain ATCC BAA-1158 / Py2), this protein is Ribosome-binding factor A.